The following is a 343-amino-acid chain: Anthranilate phosphoribosyltransferase (343 aa).

Residues Gly-81, 84-85 (GD), 91-94 (NLST), 109-117 (KHGNRSVSS), and Ser-121 contribute to the 5-phospho-alpha-D-ribose 1-diphosphate site. Gly-81 lines the anthranilate pocket. Ser-93 contributes to the Mg(2+) binding site. Anthranilate is bound at residue Asn-112. Arg-167 serves as a coordination point for anthranilate. The Mg(2+) site is built by Asp-226 and Glu-227.

Belongs to the anthranilate phosphoribosyltransferase family. Homodimer. Mg(2+) serves as cofactor.

The enzyme catalyses N-(5-phospho-beta-D-ribosyl)anthranilate + diphosphate = 5-phospho-alpha-D-ribose 1-diphosphate + anthranilate. The protein operates within amino-acid biosynthesis; L-tryptophan biosynthesis; L-tryptophan from chorismate: step 2/5. Its function is as follows. Catalyzes the transfer of the phosphoribosyl group of 5-phosphorylribose-1-pyrophosphate (PRPP) to anthranilate to yield N-(5'-phosphoribosyl)-anthranilate (PRA). This chain is Anthranilate phosphoribosyltransferase, found in Cellvibrio japonicus (strain Ueda107) (Pseudomonas fluorescens subsp. cellulosa).